A 424-amino-acid chain; its full sequence is Probable methyltransferase EP424R (424 aa).

An Adrift-type SAM-dependent 2'-O-MTase domain is found at 103-315 (QIVTNAWLKM…TYIVGKNRLR (213 aa)). Positions 135 and 228 each coordinate S-adenosyl-L-methionine. Residue Lys-268 is the Proton acceptor of the active site.

It is found in the virion. The chain is Probable methyltransferase EP424R from Ornithodoros (relapsing fever ticks).